A 470-amino-acid polypeptide reads, in one-letter code: MESRNLLRQLPAVDQLLQHPRLKDLSRENYKMVLALTRQVLDDWRLKIKNGATTIPDPGQLAREIENRYHEAGRSSLRPVINATGVVLHTNLGRAILSPAARAAALTAAGRYTNLEYDLEKGQRGNRYSHVTGLLKELTGAEEALVVNNNAAAVLLALSTLAAGRETIISRGQLVEIGGSFRIPEVMGQSGTRLVEVGTTNKTYIHDYERAVGPDTALLLKVHPSNYRIQGFTREVTTAELVELGRRVGVPVMEDLGSGFLIDLEAYGITGEPTVQAEINQGVDVVTFSGDKLLGGPQAGIIVGRRDLVAAMAGHPLTRALRIDKMNLAALEATLRAYRNPDRAVKEIPTLAALVALPEDLRLRAEELQKLLTSVLGSRARVGLMPTTSQAGGGSLPVTELPSWAITIRPEQGGAAGLVTALRRTDPPVLARVQDDLLLLDVRTLLPGEGEELARALVQALEGAVHGGES.

K292 carries the post-translational modification N6-(pyridoxal phosphate)lysine.

The protein belongs to the SelA family. Pyridoxal 5'-phosphate is required as a cofactor.

Its subcellular location is the cytoplasm. The enzyme catalyses L-seryl-tRNA(Sec) + selenophosphate + H(+) = L-selenocysteinyl-tRNA(Sec) + phosphate. Its pathway is aminoacyl-tRNA biosynthesis; selenocysteinyl-tRNA(Sec) biosynthesis; selenocysteinyl-tRNA(Sec) from L-seryl-tRNA(Sec) (bacterial route): step 1/1. Converts seryl-tRNA(Sec) to selenocysteinyl-tRNA(Sec) required for selenoprotein biosynthesis. In Moorella thermoacetica (strain ATCC 39073 / JCM 9320), this protein is L-seryl-tRNA(Sec) selenium transferase.